The chain runs to 295 residues: Glutamyl-Q tRNA(Asp) synthetase (295 aa).

L-glutamate is bound by residues 9-13 (RFAPT) and Glu45. The 'HIGH' region signature appears at 12–22 (PTPSGFLHFGS). Cys101, Cys103, Tyr115, and Cys119 together coordinate Zn(2+). Residues Tyr172 and Arg190 each contribute to the L-glutamate site. Residues 228–232 (KLGKS) carry the 'KMSKS' region motif. Residue Lys231 coordinates ATP.

It belongs to the class-I aminoacyl-tRNA synthetase family. GluQ subfamily. Zn(2+) is required as a cofactor.

In terms of biological role, catalyzes the tRNA-independent activation of glutamate in presence of ATP and the subsequent transfer of glutamate onto a tRNA(Asp). Glutamate is transferred on the 2-amino-5-(4,5-dihydroxy-2-cyclopenten-1-yl) moiety of the queuosine in the wobble position of the QUC anticodon. In Pseudomonas putida (strain W619), this protein is Glutamyl-Q tRNA(Asp) synthetase.